The primary structure comprises 348 residues: Ferredoxin--NADP reductase (348 aa).

8 residues coordinate FAD: Thr-26, Glu-45, Gln-53, Tyr-58, Ala-98, Phe-133, Asp-299, and Ser-340.

It belongs to the ferredoxin--NADP reductase type 2 family. As to quaternary structure, homodimer. Requires FAD as cofactor.

It carries out the reaction 2 reduced [2Fe-2S]-[ferredoxin] + NADP(+) + H(+) = 2 oxidized [2Fe-2S]-[ferredoxin] + NADPH. This Prosthecochloris aestuarii (strain DSM 271 / SK 413) protein is Ferredoxin--NADP reductase.